Here is a 143-residue protein sequence, read N- to C-terminus: Endoribonuclease YbeY (143 aa).

The Zn(2+) site is built by H109, H113, and H119.

This sequence belongs to the endoribonuclease YbeY family. Zn(2+) is required as a cofactor.

It is found in the cytoplasm. Its function is as follows. Single strand-specific metallo-endoribonuclease involved in late-stage 70S ribosome quality control and in maturation of the 3' terminus of the 16S rRNA. The sequence is that of Endoribonuclease YbeY from Neorickettsia sennetsu (strain ATCC VR-367 / Miyayama) (Ehrlichia sennetsu).